The chain runs to 351 residues: Dihydroorotate dehydrogenase (quinone) (351 aa).

FMN contacts are provided by residues 67–71 (AGFDK) and Thr91. Lys71 provides a ligand contact to substrate. 116–120 (NAMGF) contacts substrate. The FMN site is built by Asn145 and Asn178. Position 178 (Asn178) interacts with substrate. Ser181 acts as the Nucleophile in catalysis. Asn183 provides a ligand contact to substrate. The FMN site is built by Lys214 and Thr242. 243–244 (NT) serves as a coordination point for substrate. Residues Gly262, Gly291, and 312–313 (YS) each bind FMN.

Belongs to the dihydroorotate dehydrogenase family. Type 2 subfamily. Monomer. FMN serves as cofactor.

It is found in the cell membrane. It carries out the reaction (S)-dihydroorotate + a quinone = orotate + a quinol. Its pathway is pyrimidine metabolism; UMP biosynthesis via de novo pathway; orotate from (S)-dihydroorotate (quinone route): step 1/1. In terms of biological role, catalyzes the conversion of dihydroorotate to orotate with quinone as electron acceptor. The chain is Dihydroorotate dehydrogenase (quinone) from Helicobacter pylori (strain Shi470).